A 142-amino-acid polypeptide reads, in one-letter code: Large ribosomal subunit protein uL11 (142 aa).

Belongs to the universal ribosomal protein uL11 family. As to quaternary structure, part of the ribosomal stalk of the 50S ribosomal subunit. Interacts with L10 and the large rRNA to form the base of the stalk. L10 forms an elongated spine to which L12 dimers bind in a sequential fashion forming a multimeric L10(L12)X complex. In terms of processing, one or more lysine residues are methylated.

Its function is as follows. Forms part of the ribosomal stalk which helps the ribosome interact with GTP-bound translation factors. This is Large ribosomal subunit protein uL11 from Acidithiobacillus ferrooxidans (strain ATCC 23270 / DSM 14882 / CIP 104768 / NCIMB 8455) (Ferrobacillus ferrooxidans (strain ATCC 23270)).